We begin with the raw amino-acid sequence, 69 residues long: Large ribosomal subunit protein uL29 (69 aa).

Belongs to the universal ribosomal protein uL29 family.

The chain is Large ribosomal subunit protein uL29 from Synechococcus sp. (strain WH7803).